We begin with the raw amino-acid sequence, 460 residues long: ATP synthase subunit beta (460 aa).

An ATP-binding site is contributed by 150–157; it reads GGAGVGKT.

The protein belongs to the ATPase alpha/beta chains family. F-type ATPases have 2 components, CF(1) - the catalytic core - and CF(0) - the membrane proton channel. CF(1) has five subunits: alpha(3), beta(3), gamma(1), delta(1), epsilon(1). CF(0) has three main subunits: a(1), b(2) and c(9-12). The alpha and beta chains form an alternating ring which encloses part of the gamma chain. CF(1) is attached to CF(0) by a central stalk formed by the gamma and epsilon chains, while a peripheral stalk is formed by the delta and b chains.

It is found in the cell inner membrane. The catalysed reaction is ATP + H2O + 4 H(+)(in) = ADP + phosphate + 5 H(+)(out). Its function is as follows. Produces ATP from ADP in the presence of a proton gradient across the membrane. The catalytic sites are hosted primarily by the beta subunits. This chain is ATP synthase subunit beta, found in Pectobacterium atrosepticum (strain SCRI 1043 / ATCC BAA-672) (Erwinia carotovora subsp. atroseptica).